A 194-amino-acid polypeptide reads, in one-letter code: PRELI domain containing protein 3B (194 aa).

The region spanning 1 to 172 (MKIWTSEHVF…VIHKLNAEIE (172 aa)) is the PRELI/MSF1 domain. Phosphoserine is present on residues Ser46 and Ser51.

Belongs to the slowmo family.

This Sus scrofa (Pig) protein is PRELI domain containing protein 3B (PRELID3B).